The primary structure comprises 217 residues: Protein GrpE (217 aa).

Composition is skewed to acidic residues over residues 1-28 (MSDD…EGDD), 136-152 (DILD…DPGT), and 204-217 (SEAE…DGDE). Disordered regions lie at residues 1–44 (MSDD…NDPA), 135–157 (DDIL…TDPK), and 193–217 (QVTV…DGDE).

It belongs to the GrpE family. Homodimer.

The protein resides in the cytoplasm. In terms of biological role, participates actively in the response to hyperosmotic and heat shock by preventing the aggregation of stress-denatured proteins, in association with DnaK and GrpE. It is the nucleotide exchange factor for DnaK and may function as a thermosensor. Unfolded proteins bind initially to DnaJ; upon interaction with the DnaJ-bound protein, DnaK hydrolyzes its bound ATP, resulting in the formation of a stable complex. GrpE releases ADP from DnaK; ATP binding to DnaK triggers the release of the substrate protein, thus completing the reaction cycle. Several rounds of ATP-dependent interactions between DnaJ, DnaK and GrpE are required for fully efficient folding. The chain is Protein GrpE from Natronomonas pharaonis (strain ATCC 35678 / DSM 2160 / CIP 103997 / JCM 8858 / NBRC 14720 / NCIMB 2260 / Gabara) (Halobacterium pharaonis).